The sequence spans 370 residues: Chloromuconate cycloisomerase (370 aa).

Residue Lys165 is the Proton acceptor of the active site. Residues Asp194, Glu220, and Asp245 each coordinate Mn(2+). Glu323 serves as the catalytic Proton donor.

The protein belongs to the mandelate racemase/muconate lactonizing enzyme family. Requires Mn(2+) as cofactor.

The enzyme catalyses 2-[(2R)-2-chloro-2,5-dihydro-5-oxofuryl]acetate = 3-chloro-cis,cis-muconate + H(+). It functions in the pathway aromatic compound metabolism; 3-chlorocatechol degradation. This chain is Chloromuconate cycloisomerase (tfdDI), found in Cupriavidus pinatubonensis (strain JMP 134 / LMG 1197) (Cupriavidus necator (strain JMP 134)).